We begin with the raw amino-acid sequence, 252 residues long: Large ribosomal subunit protein uL4 (252 aa).

The protein belongs to the universal ribosomal protein uL4 family. Part of the 50S ribosomal subunit.

Its function is as follows. One of the primary rRNA binding proteins, this protein initially binds near the 5'-end of the 23S rRNA. It is important during the early stages of 50S assembly. It makes multiple contacts with different domains of the 23S rRNA in the assembled 50S subunit and ribosome. Forms part of the polypeptide exit tunnel. This is Large ribosomal subunit protein uL4 from Methanococcus maripaludis (strain C6 / ATCC BAA-1332).